We begin with the raw amino-acid sequence, 667 residues long: Probable export ATP-binding/permease protein MacB (667 aa).

Positions leucine 22 to glutamate 260 constitute an ABC transporter domain. An ATP-binding site is contributed by glycine 58 to serine 65. 4 consecutive transmembrane segments (helical) span residues leucine 292–glycine 312, leucine 540–methionine 560, isoleucine 601–valine 621, and leucine 630–valine 650.

It belongs to the ABC transporter superfamily. Macrolide exporter (TC 3.A.1.122) family. In terms of assembly, probably part of a tripartite efflux system, which is composed of an inner membrane transporter, a periplasmic membrane fusion protein, and an outer membrane component.

The protein resides in the cell inner membrane. Its function is as follows. Probably part of a tripartite efflux system. The sequence is that of Probable export ATP-binding/permease protein MacB from Pseudomonas entomophila (strain L48).